A 203-amino-acid chain; its full sequence is Ras-related protein Rab5A (203 aa).

GTP is bound at residue 18–26 (GDVGTGKSS). Positions 40 to 48 (QESTIGAAF) match the Effector region motif. Residues 66-70 (DTAGQ), 124-127 (NKAD), and 154-155 (SA) each bind GTP. Residues Cys-201 and Cys-202 are each lipidated (S-geranylgeranyl cysteine).

The protein belongs to the small GTPase superfamily. Rab family. As to quaternary structure, interacts with VPS9A. Interacts with NSF and RBP-L. In terms of tissue distribution, highly expressed in roots. Expressed at low levels in shoots, flowers and grains.

The protein resides in the prevacuolar compartment membrane. Its subcellular location is the golgi apparatus membrane. It localises to the cell membrane. It is found in the protein storage vacuole membrane. Its function is as follows. Plays an important role in intracellular trafficking of seed storage proteins to the protein storage vacuoles (PSVs). Participates in the transport of the proglutelins from the Golgi apparatus to the PSVs in endosperm. Functions cooperatively with VPS9A to regulate post-Golgi dense vesicle-mediated transport of storage proteins to the type II protein bodies (PBII) protein storage vacuoles in developing endosperm. Involved in the maintenance of the general structural organization of the endomembrane system in developing endosperm. Binds GTP in vitro. Forms a quaternary complex with the two glutelin zipcode RNA-binding proteins RBP-L and RBP-P, and the membrane trafficking factor NSF. This quaternay complex carries glutelin mRNAs for active transport on endosomes to the cortical endoplasmic reticulum membrane, and enables endosome-mediated glutelin mRNA transport in endosperm cells. This is Ras-related protein Rab5A from Oryza sativa subsp. japonica (Rice).